The primary structure comprises 454 residues: Ribosomal protein uS12 methylthiotransferase RimO (454 aa).

In terms of domain architecture, MTTase N-terminal spans 14-125 (SKVAFSHVGC…IAKVLDRVEK (112 aa)). The [4Fe-4S] cluster site is built by Cys-23, Cys-59, Cys-88, Cys-163, Cys-167, and Cys-170. Residues 149–378 (DKNKFVAYLR…ISVQQNISKD (230 aa)) enclose the Radical SAM core domain. A TRAM domain is found at 381-452 (QSYVGSKMKI…EYDLYGETIK (72 aa)).

This sequence belongs to the methylthiotransferase family. RimO subfamily. The cofactor is [4Fe-4S] cluster.

Its subcellular location is the cytoplasm. The catalysed reaction is L-aspartate(89)-[ribosomal protein uS12]-hydrogen + (sulfur carrier)-SH + AH2 + 2 S-adenosyl-L-methionine = 3-methylsulfanyl-L-aspartate(89)-[ribosomal protein uS12]-hydrogen + (sulfur carrier)-H + 5'-deoxyadenosine + L-methionine + A + S-adenosyl-L-homocysteine + 2 H(+). Catalyzes the methylthiolation of an aspartic acid residue of ribosomal protein uS12. The polypeptide is Ribosomal protein uS12 methylthiotransferase RimO (Prochlorococcus marinus (strain MIT 9312)).